The primary structure comprises 123 residues: Small ribosomal subunit protein bS16 (123 aa).

This sequence belongs to the bacterial ribosomal protein bS16 family.

The chain is Small ribosomal subunit protein bS16 from Treponema pallidum (strain Nichols).